Here is a 161-residue protein sequence, read N- to C-terminus: Carboxysome assembly protein CcmN (161 aa).

The tract at residues 111-140 (LLSAETPPTTATVSSSEPAGRSPQSSAIAH) is disordered. Polar residues predominate over residues 116–137 (TPPTTATVSSSEPAGRSPQSSA). Residues 144-161 (VYGKEQFLRMRQSMFPDR) carry the Encapsulation peptide motif.

Belongs to the CcmN family. As to quaternary structure, interacts with CcmM via the N-terminus of CcmN. Interacts with CcmK2 via the 18 C-terminal residues.

The protein resides in the carboxysome. Its function is as follows. Required for carboxysome formation; the N-terminus interacts with CcmM which itself binds RuBisCO (ribulose bisphosphate carboxylase, rbcL-rbcS), while the C-terminal 18 residues interact with carboxysome shell protein CcmK2. Required for growth in normal air. Beta-carboxysome assembly initiates when soluble RuBisCO is condensed into a liquid matrix in a pre-carboxysome by the RbcS-like domains of probably both CcmM58 and CcmM35. CcmN interacts with the N-terminus of CcmM58, and then recruits the CcmK2 major shell protein via CcmN's encapsulation peptide. Shell formation requires CcmK proteins and CcmO. CcmL caps the otherwise elongated carboxysome. Once fully encapsulated carboxysomes are formed, they migrate within the cell probably via interactions with the cytoskeleton. The protein is Carboxysome assembly protein CcmN of Synechococcus elongatus (strain ATCC 33912 / PCC 7942 / FACHB-805) (Anacystis nidulans R2).